A 352-amino-acid chain; its full sequence is UDP-N-acetylglucosamine--N-acetylmuramyl-(pentapeptide) pyrophosphoryl-undecaprenol N-acetylglucosamine transferase (352 aa).

Positions 195 and 287 each coordinate UDP-N-acetyl-alpha-D-glucosamine.

Belongs to the glycosyltransferase 28 family. MurG subfamily.

The protein localises to the cell membrane. The catalysed reaction is Mur2Ac(oyl-L-Ala-gamma-D-Glu-L-Lys-D-Ala-D-Ala)-di-trans,octa-cis-undecaprenyl diphosphate + UDP-N-acetyl-alpha-D-glucosamine = beta-D-GlcNAc-(1-&gt;4)-Mur2Ac(oyl-L-Ala-gamma-D-Glu-L-Lys-D-Ala-D-Ala)-di-trans,octa-cis-undecaprenyl diphosphate + UDP + H(+). The protein operates within cell wall biogenesis; peptidoglycan biosynthesis. Its function is as follows. Cell wall formation. Catalyzes the transfer of a GlcNAc subunit on undecaprenyl-pyrophosphoryl-MurNAc-pentapeptide (lipid intermediate I) to form undecaprenyl-pyrophosphoryl-MurNAc-(pentapeptide)GlcNAc (lipid intermediate II). This is UDP-N-acetylglucosamine--N-acetylmuramyl-(pentapeptide) pyrophosphoryl-undecaprenol N-acetylglucosamine transferase from Streptococcus pneumoniae serotype 19F (strain G54).